Consider the following 456-residue polypeptide: O-phospho-L-seryl-tRNA:Cys-tRNA synthase 2 (456 aa).

Residues 146–147 (AR), Asn251, and 274–276 (SGH) each bind pyridoxal 5'-phosphate. Lys277 carries the post-translational modification N6-(pyridoxal phosphate)lysine.

The protein belongs to the SepCysS family. As to quaternary structure, homodimer. Interacts with SepRS. It depends on pyridoxal 5'-phosphate as a cofactor.

It catalyses the reaction O-phospho-L-seryl-tRNA(Cys) + hydrogen sulfide + H(+) = L-cysteinyl-tRNA(Cys) + phosphate. Its function is as follows. Converts O-phospho-L-seryl-tRNA(Cys) (Sep-tRNA(Cys)) to L-cysteinyl-tRNA(Cys) (Cys-tRNA(Cys)). The sequence is that of O-phospho-L-seryl-tRNA:Cys-tRNA synthase 2 from Methanospirillum hungatei JF-1 (strain ATCC 27890 / DSM 864 / NBRC 100397 / JF-1).